The following is a 284-amino-acid chain: Ribosomal RNA small subunit methyltransferase A (284 aa).

N28, L30, G55, E77, D103, and N123 together coordinate S-adenosyl-L-methionine.

It belongs to the class I-like SAM-binding methyltransferase superfamily. rRNA adenine N(6)-methyltransferase family. RsmA subfamily.

It is found in the cytoplasm. It carries out the reaction adenosine(1518)/adenosine(1519) in 16S rRNA + 4 S-adenosyl-L-methionine = N(6)-dimethyladenosine(1518)/N(6)-dimethyladenosine(1519) in 16S rRNA + 4 S-adenosyl-L-homocysteine + 4 H(+). Its function is as follows. Specifically dimethylates two adjacent adenosines (A1518 and A1519) in the loop of a conserved hairpin near the 3'-end of 16S rRNA in the 30S particle. May play a critical role in biogenesis of 30S subunits. This Bradyrhizobium diazoefficiens (strain JCM 10833 / BCRC 13528 / IAM 13628 / NBRC 14792 / USDA 110) protein is Ribosomal RNA small subunit methyltransferase A.